A 1980-amino-acid polypeptide reads, in one-letter code: MAARLLAPPGPDSFKPFTPESLANIERRIAESKLKKPPKADGSHREDDEDSKPKPNSDLEAGKSLPFIYGDIPQGLVAVPLEDFDPYYLTQKTFVVLNRGKTLFRFSATPALYILSPFNLIRRIAIKILIHSVFSMIIMCTILTNCVFMTFSNPPDWSKNVEYTFTGIYTFESLVKIIARGFCIDGFTFLRDPWNWLDFSVIMMAYITEFVNLGNVSALRTFRVLRALKTISVIPGLKTIVGALIQSVKKLSDVMILTVFCLSVFALIGLQLFMGNLRNKCVVWPINFNESYLENGTKGFDWEEYINNKTNFYTVPGMLEPLLCGNSSDAGQCPEGYQCMKAGRNPNYGYTSFDTFSWAFLALFRLMTQDYWENLYQLTLRAAGKTYMIFFVLVIFVGSFYLVNLILAVVAMAYEEQNQATLEEAEQKEAEFKAMLEQLKKQQEEAQAAAMATSAGTVSEDAIEEEGEEGGGSPRSSSEISKLSSKSAKERRNRRKKRKQKELSEGEEKGDPEKVFKSESEDGMRRKAFRLPDNRIGRKFSIMNQSLLSIPGSPFLSRHNSKSSIFSFRGPGRFRDPGSENEFADDEHSTVEESEGRRDSLFIPIRARERRSSYSGYSGYSQGSRSSRIFPSLRRSVKRNSTVDCNGVVSLIGGPGSHIGGRLLPEATTEVEIKKKGPGSLLVSMDQLASYGRKDRINSIMSVVTNTLVEELEESQRKCPPCWYKFANTFLIWECHPYWIKLKEIVNLIVMDPFVDLAITICIVLNTLFMAMEHHPMTPQFEHVLAVGNLVFTGIFTAEMFLKLIAMDPYYYFQEGWNIFDGFIVSLSLMELSLADVEGLSVLRSFRLLRVFKLAKSWPTLNMLIKIIGNSVGALGNLTLVLAIIVFIFAVVGMQLFGKSYKECVCKINQDCELPRWHMHDFFHSFLIVFRVLCGEWIETMWDCMEVAGQAMCLIVFMMVMVIGNLVVLNLFLALLLSSFSADNLAATDDDGEMNNLQISVIRIKKGVAWTKLKVHAFMQAHFKQREADEVKPLDELYEKKANCIANHTGADIHRNGDFQKNGNGTTSGIGSSVEKYIIDEDHMSFINNPNLTVRVPIAVGESDFENLNTEDVSSESDPEGSKDKLDDTSSSEGSTIDIKPEVEEVPVEQPEEYLDPDACFTEGCVQRFKCCQVNIEEGLGKSWWILRKTCFLIVEHNWFETFIIFMILLSSGALAFEDIYIEQRKTIRTILEYADKVFTYIFILEMLLKWTAYGFVKFFTNAWCWLDFLIVAVSLVSLIANALGYSELGAIKSLRTLRALRPLRALSRFEGMRVVVNALVGAIPSIMNVLLVCLIFWLIFSIMGVNLFAGKYHYCFNETSEIRFEIEDVNNKTECEKLMEGNNTEIRWKNVKINFDNVGAGYLALLQVATFKGWMDIMYAAVDSRKPDEQPKYEDNIYMYIYFVIFIIFGSFFTLNLFIGVIIDNFNQQKKKFGGQDIFMTEEQKKYYNAMKKLGSKKPQKPIPRPLNKIQGIVFDFVTQQAFDIVIMMLICLNMVTMMVETDTQSKQMENILYWINLVFVIFFTCECVLKMFALRHYYFTIGWNIFDFVVVILSIVGMFLADIIEKYFVSPTLFRVIRLARIGRILRLIKGAKGIRTLLFALMMSLPALFNIGLLLFLVMFIFSIFGMSNFAYVKHEAGIDDMFNFETFGNSMICLFQITTSAGWDGLLLPILNRPPDCSLDKEHPGSGFKGDCGNPSVGIFFFVSYIIISFLIVVNMYIAIILENFSVATEESADPLSEDDFETFYEIWEKFDPDATQFIEYCKLADFADALEHPLRVPKPNTIELIAMDLPMVSGDRIHCLDILFAFTKRVLGDSGELDILRQQMEERFVASNPSKVSYEPITTTLRRKQEEVSAVVLQRAYRGHLARRGFICKKTTSNKLENGGTHREKKESTPSTASLPSYDSVTKPEKEKQQRAEEGRRERAKRQKEVRESKC.

Disordered regions lie at residues 1–20 (MAAR…FTPE) and 28–62 (RIAE…LEAG). Residues 1-132 (MAARLLAPPG…RIAIKILIHS (132 aa)) lie on the Cytoplasmic side of the membrane. The span at 28–61 (RIAESKLKKPPKADGSHREDDEDSKPKPNSDLEA) shows a compositional bias: basic and acidic residues. An I repeat occupies 114–442 (ILSPFNLIRR…KAMLEQLKKQ (329 aa)). The chain crosses the membrane as a helical span at residues 133 to 151 (VFSMIIMCTILTNCVFMTF). At 152–158 (SNPPDWS) the chain is on the extracellular side. Residues 159 to 179 (KNVEYTFTGIYTFESLVKIIA) traverse the membrane as a helical segment. The Cytoplasmic portion of the chain corresponds to 180–193 (RGFCIDGFTFLRDP). The chain crosses the membrane as a helical span at residues 194–211 (WNWLDFSVIMMAYITEFV). Over 212–217 (NLGNVS) the chain is Extracellular. The N-linked (GlcNAc...) asparagine glycan is linked to N215. Residues 218–234 (ALRTFRVLRALKTISVI) traverse the membrane as a helical segment. Residues 235 to 253 (PGLKTIVGALIQSVKKLSD) lie on the Cytoplasmic side of the membrane. A helical transmembrane segment spans residues 254 to 273 (VMILTVFCLSVFALIGLQLF). At 274-355 (MGNLRNKCVV…PNYGYTSFDT (82 aa)) the chain is on the extracellular side. Cysteines 281 and 333 form a disulfide. 3 N-linked (GlcNAc...) asparagine glycosylation sites follow: N289, N295, and N308. N-linked (GlcNAc...) (high mannose) asparagine glycosylation occurs at N326. An intramembrane region (pore-forming) is located at residues 356–380 (FSWAFLALFRLMTQDYWENLYQLTL). Na(+) is bound at residue E373. Over 381-387 (RAAGKTY) the chain is Extracellular. Residues 388–408 (MIFFVLVIFVGSFYLVNLILA) form a helical membrane-spanning segment. Residues 409–753 (VVAMAYEEQN…EIVNLIVMDP (345 aa)) lie on the Cytoplasmic side of the membrane. Disordered stretches follow at residues 446 to 530 (AQAA…KAFR) and 568 to 602 (FRGP…DSLF). Residues 474–486 (PRSSSEISKLSSK) show a composition bias toward low complexity. A compositionally biased stretch (basic residues) spans 489–500 (KERRNRRKKRKQ). Basic and acidic residues-rich tracts occupy residues 501 to 530 (KELS…KAFR) and 586 to 602 (DEHS…DSLF). A phosphoserine mark is found at S518 and S520. Residues 735–1007 (CHPYWIKLKE…QISVIRIKKG (273 aa)) form an II repeat. Residues 754-772 (FVDLAITICIVLNTLFMAM) form a helical membrane-spanning segment. Over 773–783 (EHHPMTPQFEH) the chain is Extracellular. Residues 784 to 803 (VLAVGNLVFTGIFTAEMFLK) form a helical membrane-spanning segment. Over 804 to 817 (LIAMDPYYYFQEGW) the chain is Cytoplasmic. A helical membrane pass occupies residues 818-837 (NIFDGFIVSLSLMELSLADV). The Extracellular segment spans residues 838-839 (EG). A helical membrane pass occupies residues 840-857 (LSVLRSFRLLRVFKLAKS). At 858–873 (WPTLNMLIKIIGNSVG) the chain is on the cytoplasmic side. A helical membrane pass occupies residues 874-892 (ALGNLTLVLAIIVFIFAVV). The Extracellular segment spans residues 893 to 921 (GMQLFGKSYKECVCKINQDCELPRWHMHD). The cysteines at positions 906 and 912 are disulfide-linked. Residues 922 to 942 (FFHSFLIVFRVLCGEWIETMW) constitute an intramembrane region (pore-forming). E936 and E939 together coordinate Na(+). The Extracellular portion of the chain corresponds to 943–955 (DCMEVAGQAMCLI). C944 and C953 are oxidised to a cystine. Residues 956-976 (VFMMVMVIGNLVVLNLFLALL) form a helical membrane-spanning segment. Topologically, residues 977 to 1199 (LSSFSADNLA…TCFLIVEHNW (223 aa)) are cytoplasmic. The tract at residues 1107-1148 (NLNTEDVSSESDPEGSKDKLDDTSSSEGSTIDIKPEVEEVPV) is disordered. An III repeat occupies 1180 to 1495 (LGKSWWILRK…KKYYNAMKKL (316 aa)). A helical transmembrane segment spans residues 1200 to 1217 (FETFIIFMILLSSGALAF). Residues 1218-1230 (EDIYIEQRKTIRT) are Extracellular-facing. Residues 1231–1249 (ILEYADKVFTYIFILEMLL) traverse the membrane as a helical segment. At 1250–1263 (KWTAYGFVKFFTNA) the chain is on the cytoplasmic side. A helical transmembrane segment spans residues 1264 to 1282 (WCWLDFLIVAVSLVSLIAN). Residues 1283 to 1290 (ALGYSELG) lie on the Extracellular side of the membrane. Residues 1291 to 1309 (AIKSLRTLRALRPLRALSR) form a helical membrane-spanning segment. Residues 1310 to 1326 (FEGMRVVVNALVGAIPS) are Cytoplasmic-facing. A helical membrane pass occupies residues 1327–1346 (IMNVLLVCLIFWLIFSIMGV). Over 1347–1399 (NLFAGKYHYCFNETSEIRFEIEDVNNKTECEKLMEGNNTEIRWKNVKINFDNV) the chain is Extracellular. Cysteines 1356 and 1376 form a disulfide. Residues N1358, N1372, and N1383 are each glycosylated (N-linked (GlcNAc...) asparagine). An intramembrane region (pore-forming) is located at residues 1400 to 1421 (GAGYLALLQVATFKGWMDIMYA). The Extracellular segment spans residues 1422–1438 (AVDSRKPDEQPKYEDNI). The helical transmembrane segment at 1439-1460 (YMYIYFVIFIIFGSFFTLNLFI) threads the bilayer. The Cytoplasmic segment spans residues 1461–1523 (GVIIDNFNQQ…IVFDFVTQQA (63 aa)). Position 1497 is a phosphoserine; by PKC (S1497). Residues 1504–1801 (IPRPLNKIQG…WEKFDPDATQ (298 aa)) form an IV repeat. Residues 1524–1541 (FDIVIMMLICLNMVTMMV) form a helical membrane-spanning segment. Topologically, residues 1542–1552 (ETDTQSKQMEN) are extracellular. The helical transmembrane segment at 1553–1571 (ILYWINLVFVIFFTCECVL) threads the bilayer. At 1572-1583 (KMFALRHYYFTI) the chain is on the cytoplasmic side. The chain crosses the membrane as a helical span at residues 1584-1601 (GWNIFDFVVVILSIVGMF). Residues 1602–1614 (LADIIEKYFVSPT) are Extracellular-facing. The chain crosses the membrane as a helical span at residues 1615–1631 (LFRVIRLARIGRILRLI). Residues 1632–1650 (KGAKGIRTLLFALMMSLPA) lie on the Cytoplasmic side of the membrane. Residues 1651-1668 (LFNIGLLLFLVMFIFSIF) traverse the membrane as a helical segment. Over 1669-1690 (GMSNFAYVKHEAGIDDMFNFET) the chain is Extracellular. Residues 1691–1713 (FGNSMICLFQITTSAGWDGLLLP) constitute an intramembrane region (pore-forming). Residues 1714–1742 (ILNRPPDCSLDKEHPGSGFKGDCGNPSVG) are Extracellular-facing. C1721 and C1736 form a disulfide bridge. The chain crosses the membrane as a helical span at residues 1743-1765 (IFFFVSYIIISFLIVVNMYIAII). Residues 1766–1980 (LENFSVATEE…RQKEVRESKC (215 aa)) are Cytoplasmic-facing. One can recognise an IQ domain in the interval 1895-1924 (EEVSAVVLQRAYRGHLARRGFICKKTTSNK). The interval 1922-1980 (SNKLENGGTHREKKESTPSTASLPSYDSVTKPEKEKQQRAEEGRRERAKRQKEVRESKC) is disordered. Positions 1938 to 1949 (TPSTASLPSYDS) are enriched in polar residues. Residues 1951 to 1980 (TKPEKEKQQRAEEGRRERAKRQKEVRESKC) are compositionally biased toward basic and acidic residues.

Belongs to the sodium channel (TC 1.A.1.10) family. Nav1.6/SCN8A subfamily. The voltage-sensitive sodium channel consists of an ion-conducting pore-forming alpha subunit regulated by one or more beta-1 (SCN1B), beta-2 (SCN2B), beta-3 (SCN3B) and/or beta-4 (SCN4B) subunits. Beta-1 (SCN1B) and beta-3 (SCN3B) are non-covalently associated with alpha, while beta-2 (SCN2B) and beta-4 (SCN4B) are covalently linked by disulfide bonds. Interacts with NEDD4 and NEDD4L. Interacts with FGF13. Interacts with FGF14, GBG3, GBB2 and SCN1B. Interacts with TMEM233. Interacts with the conotoxin GVIIJ. Interacts with the spider beta/delta-theraphotoxin-Pre1a. Interacts with CALM1; the interaction modulates the inactivation rate of SCN8A. Post-translationally, may be ubiquitinated by NEDD4L; which would promote its endocytosis. Phosphorylation at Ser-1497 by PKC in a highly conserved cytoplasmic loop slows inactivation of the sodium channel and reduces peak sodium currents. Expressed in the hippocampus with increased expression in epileptic tissue compared to normal adjacent tissue (at protein level). In terms of tissue distribution, expressed in non-neuronal tissues, such as monocytes/macrophages.

It localises to the cell membrane. Its subcellular location is the cell projection. The protein resides in the axon. The protein localises to the cytoplasmic vesicle. It is found in the podosome. It catalyses the reaction Na(+)(in) = Na(+)(out). Its activity is regulated as follows. Inhibited by tetrodotoxin and, more weakly, by its metabolite 4,9-ah-tetrodotoxin. Pore-forming subunit of a voltage-gated sodium channel complex assuming opened or closed conformations in response to the voltage difference across membranes and through which sodium ions selectively pass along their electrochemical gradient. Contributes to neuronal excitability by regulating action potential threshold and propagation. Its function is as follows. More specifically expressed in non-neuronal cells, could play a role in sodium release from intracellular compartments and participate in the control of podosomes formation and macrophages adhesion and movement. The polypeptide is Sodium channel protein type 8 subunit alpha (Homo sapiens (Human)).